The following is a 458-amino-acid chain: Argininosuccinate lyase (458 aa).

It belongs to the lyase 1 family. Argininosuccinate lyase subfamily.

It is found in the cytoplasm. It carries out the reaction 2-(N(omega)-L-arginino)succinate = fumarate + L-arginine. Its pathway is amino-acid biosynthesis; L-arginine biosynthesis; L-arginine from L-ornithine and carbamoyl phosphate: step 3/3. This is Argininosuccinate lyase from Lachnospira eligens (strain ATCC 27750 / DSM 3376 / VPI C15-48 / C15-B4) (Eubacterium eligens).